The following is a 116-amino-acid chain: Large ribosomal subunit protein bL17 (116 aa).

It belongs to the bacterial ribosomal protein bL17 family. In terms of assembly, part of the 50S ribosomal subunit. Contacts protein L32.

This is Large ribosomal subunit protein bL17 from Picosynechococcus sp. (strain ATCC 27264 / PCC 7002 / PR-6) (Agmenellum quadruplicatum).